The sequence spans 387 residues: Eukaryotic translation initiation factor 3 subunit M (387 aa).

One can recognise a PCI domain in the interval 181-340 (LSSKVMIELL…RKVHISSTMH (160 aa)).

Belongs to the eIF-3 subunit M family. As to quaternary structure, component of the eukaryotic translation initiation factor 3 (eIF-3) complex. The eIF-3 complex interacts with pix.

The protein localises to the cytoplasm. It is found in the golgi apparatus. Functionally, component of the eukaryotic translation initiation factor 3 (eIF-3) complex, which is involved in protein synthesis of a specialized repertoire of mRNAs and, together with other initiation factors, stimulates binding of mRNA and methionyl-tRNAi to the 40S ribosome. The eIF-3 complex specifically targets and initiates translation of a subset of mRNAs involved in cell proliferation. This is Eukaryotic translation initiation factor 3 subunit M from Drosophila mojavensis (Fruit fly).